A 206-amino-acid chain; its full sequence is Thymidylate kinase (206 aa).

Residue 7-14 (GGEGVGKT) coordinates ATP.

It belongs to the thymidylate kinase family.

It catalyses the reaction dTMP + ATP = dTDP + ADP. Its function is as follows. Phosphorylation of dTMP to form dTDP in both de novo and salvage pathways of dTTP synthesis. This chain is Thymidylate kinase, found in Synechococcus sp. (strain JA-2-3B'a(2-13)) (Cyanobacteria bacterium Yellowstone B-Prime).